Here is a 121-residue protein sequence, read N- to C-terminus: Large ribosomal subunit protein uL24 (121 aa).

Belongs to the universal ribosomal protein uL24 family. Part of the 50S ribosomal subunit.

One of two assembly initiator proteins, it binds directly to the 5'-end of the 23S rRNA, where it nucleates assembly of the 50S subunit. In terms of biological role, located at the polypeptide exit tunnel on the outside of the subunit. The chain is Large ribosomal subunit protein uL24 from Pyrococcus horikoshii (strain ATCC 700860 / DSM 12428 / JCM 9974 / NBRC 100139 / OT-3).